Here is a 254-residue protein sequence, read N- to C-terminus: Chalcone isomerase cfoK (254 aa).

Residues His33 and Tyr50 contribute to the active site.

The enzyme catalyses a chalcone = a flavanone.. The protein operates within secondary metabolite biosynthesis; flavonoid biosynthesis. Chalcone isomerase; part of the gene cluster that mediates the biosynthesis of chlorflavonin, a fungal flavonoid with acetolactate synthase inhibitory activity. Within the pathway, cfoK acts as chalcone isomerase (CHI), the key enzyme responsible for the tricyclic formation of flavanone through Michael-type intramolecular cyclization of chalcone. The hydrogen at C2'-OH is extracted by the imidazole ring of His-33, which induces the oxa-Michael addition to form the intermediate enolate through 6-endo-trig mode cyclization. The enolate can then be stabilized by a hydrogen bond with the Tyr-50 residue. Following enol tautomerization, the C ring, a gamma-pyranone ring, is formed. The pathway begins with the PKS-NRPS hybrid synthetase cfoA that uses benzoic acid or p-hydroxybenzoic acid as a starter unit with four rounds of chain elongation using malonyl-CoA to form the chalcone skeleton. Then, a new type of chalcone isomerase, cfoK, catalyzes the conversion of the chalcone into a flavanone by a histidine-mediated oxa-Michael addition mechanism. The desaturation of flavanone to flavone is catalyzed by a new type of flavone synthase, the flavin mononucleotide (FMN)-dependent oxidoreductase cfoJ. Monooxygenases cfoF, cfoG, and P450 cfoH are responsible for the hydroxylation of the flavonoid skeleton at sites C3, C8, and C2', respectively. Like cfoF, the dehydratase cfoI plays also a role in the hydroxylation of position C3. Methyltransferases cfoB, cfoC, and cfoD then catalyze the methylation of C7-OH, C8-OH, and C3-OH, respectively. Finally, the monooxygenase cfoE is responsible for the chlorination of flavonoid at position C3'. This chain is Chalcone isomerase cfoK, found in Aspergillus candidus.